The following is a 616-amino-acid chain: Proline--tRNA ligase (616 aa).

The protein belongs to the class-II aminoacyl-tRNA synthetase family. ProS type 1 subfamily. As to quaternary structure, homodimer.

The protein resides in the cytoplasm. The enzyme catalyses tRNA(Pro) + L-proline + ATP = L-prolyl-tRNA(Pro) + AMP + diphosphate. Catalyzes the attachment of proline to tRNA(Pro) in a two-step reaction: proline is first activated by ATP to form Pro-AMP and then transferred to the acceptor end of tRNA(Pro). As ProRS can inadvertently accommodate and process non-cognate amino acids such as alanine and cysteine, to avoid such errors it has two additional distinct editing activities against alanine. One activity is designated as 'pretransfer' editing and involves the tRNA(Pro)-independent hydrolysis of activated Ala-AMP. The other activity is designated 'posttransfer' editing and involves deacylation of mischarged Ala-tRNA(Pro). The misacylated Cys-tRNA(Pro) is not edited by ProRS. This is Proline--tRNA ligase from Streptococcus gordonii (strain Challis / ATCC 35105 / BCRC 15272 / CH1 / DL1 / V288).